We begin with the raw amino-acid sequence, 435 residues long: Protein translocase subunit SecY (435 aa).

The next 10 membrane-spanning stretches (helical) occupy residues 19-39 (ILFTIFIILVFRIGTTITVPG), 68-88 (FSVFALGVSPYITASIVVQLL), 116-136 (YIALVLAFVQAIGITAGFDTL), 147-167 (VQTYALICVLLATGSMIVTWL), 179-199 (GVSMIIFAGIVSAIPDMIKGI), 216-236 (FIFVGILIVAVLLIIYFTTFV), 269-289 (VIPVIFASSITAAPAAIFQVV), 311-331 (ISGMFMYAFLIVLFTFFYTFV), 372-392 (VGSLFLGFISILPILAKDVFG), and 395-415 (DAVALGGTSLLIIISTGIEGM).

It belongs to the SecY/SEC61-alpha family. As to quaternary structure, component of the Sec protein translocase complex. Heterotrimer consisting of SecY, SecE and SecG subunits. The heterotrimers can form oligomers, although 1 heterotrimer is thought to be able to translocate proteins. Interacts with the ribosome. Interacts with SecDF, and other proteins may be involved. Interacts with SecA.

It is found in the cell membrane. In terms of biological role, the central subunit of the protein translocation channel SecYEG. Consists of two halves formed by TMs 1-5 and 6-10. These two domains form a lateral gate at the front which open onto the bilayer between TMs 2 and 7, and are clamped together by SecE at the back. The channel is closed by both a pore ring composed of hydrophobic SecY resides and a short helix (helix 2A) on the extracellular side of the membrane which forms a plug. The plug probably moves laterally to allow the channel to open. The ring and the pore may move independently. In Streptococcus sanguinis (strain SK36), this protein is Protein translocase subunit SecY.